The primary structure comprises 119 residues: MNMTRDADLKVKAVARGVFMSPQKVRRVLDQIRGRSYEEALMILQFMPYRACEPISKVLYSAAANAKNNLGLTKASLSISEAKVDKGPILKRFRPRAQGRGFPIRKPTCQISITVQSIK.

Belongs to the universal ribosomal protein uL22 family. Part of the 50S ribosomal subunit.

It localises to the plastid. Its subcellular location is the chloroplast. In terms of biological role, this protein binds specifically to 23S rRNA. The globular domain of the protein is located near the polypeptide exit tunnel on the outside of the subunit, while an extended beta-hairpin is found that lines the wall of the exit tunnel in the center of the 70S ribosome. The polypeptide is Large ribosomal subunit protein uL22c (rpl22) (Mesostigma viride (Green alga)).